A 557-amino-acid chain; its full sequence is Dihydroxy-acid dehydratase (557 aa).

D78 serves as a coordination point for Mg(2+). Residue C119 participates in [2Fe-2S] cluster binding. D120 and K121 together coordinate Mg(2+). K121 bears the N6-carboxylysine mark. C192 lines the [2Fe-2S] cluster pocket. E442 is a binding site for Mg(2+). The active-site Proton acceptor is the S468.

It belongs to the IlvD/Edd family. Homodimer. Requires [2Fe-2S] cluster as cofactor. Mg(2+) serves as cofactor.

It catalyses the reaction (2R)-2,3-dihydroxy-3-methylbutanoate = 3-methyl-2-oxobutanoate + H2O. It carries out the reaction (2R,3R)-2,3-dihydroxy-3-methylpentanoate = (S)-3-methyl-2-oxopentanoate + H2O. It functions in the pathway amino-acid biosynthesis; L-isoleucine biosynthesis; L-isoleucine from 2-oxobutanoate: step 3/4. The protein operates within amino-acid biosynthesis; L-valine biosynthesis; L-valine from pyruvate: step 3/4. Functions in the biosynthesis of branched-chain amino acids. Catalyzes the dehydration of (2R,3R)-2,3-dihydroxy-3-methylpentanoate (2,3-dihydroxy-3-methylvalerate) into 2-oxo-3-methylpentanoate (2-oxo-3-methylvalerate) and of (2R)-2,3-dihydroxy-3-methylbutanoate (2,3-dihydroxyisovalerate) into 2-oxo-3-methylbutanoate (2-oxoisovalerate), the penultimate precursor to L-isoleucine and L-valine, respectively. The sequence is that of Dihydroxy-acid dehydratase from Bacillus anthracis (strain A0248).